The sequence spans 347 residues: Gamma-glutamyl hydrolase B (347 aa).

An N-terminal signal peptide occupies residues 1–22 (MIKLFSLFIYLYLISNLKLINT). Residues 23–314 (INNTPVIGIL…THVEQIYIFN (292 aa)) enclose the Gamma-glutamyl hydrolase domain. The active-site Nucleophile is cysteine 128. Asparagine 152, asparagine 158, and asparagine 201 each carry an N-linked (GlcNAc...) asparagine glycan. Histidine 240 serves as the catalytic Proton donor. N-linked (GlcNAc...) asparagine glycosylation is found at asparagine 273, asparagine 314, and asparagine 318.

It belongs to the peptidase C26 family.

Its subcellular location is the secreted. It is found in the extracellular space. The enzyme catalyses (6S)-5,6,7,8-tetrahydrofolyl-(gamma-L-Glu)(n) + (n-1) H2O = (6S)-5,6,7,8-tetrahydrofolate + (n-1) L-glutamate. The chain is Gamma-glutamyl hydrolase B (gghB) from Dictyostelium discoideum (Social amoeba).